Here is a 1465-residue protein sequence, read N- to C-terminus: DNA polymerase III PolC-type (1465 aa).

The 157-residue stretch at 425–581 folds into the Exonuclease domain; that stretch reads YVVFDVETTG…YDAEATGRLL (157 aa).

Belongs to the DNA polymerase type-C family. PolC subfamily.

It localises to the cytoplasm. It catalyses the reaction DNA(n) + a 2'-deoxyribonucleoside 5'-triphosphate = DNA(n+1) + diphosphate. Required for replicative DNA synthesis. This DNA polymerase also exhibits 3' to 5' exonuclease activity. In Streptococcus mutans serotype c (strain ATCC 700610 / UA159), this protein is DNA polymerase III PolC-type.